Here is a 384-residue protein sequence, read N- to C-terminus: Succinyl-diaminopimelate desuccinylase (384 aa).

His69 is a binding site for Zn(2+). The active site involves Asp71. Asp103 contacts Zn(2+). Catalysis depends on Glu137, which acts as the Proton acceptor. 3 residues coordinate Zn(2+): Glu138, Glu166, and His355.

Belongs to the peptidase M20A family. DapE subfamily. Homodimer. Zn(2+) serves as cofactor. It depends on Co(2+) as a cofactor.

It carries out the reaction N-succinyl-(2S,6S)-2,6-diaminopimelate + H2O = (2S,6S)-2,6-diaminopimelate + succinate. The protein operates within amino-acid biosynthesis; L-lysine biosynthesis via DAP pathway; LL-2,6-diaminopimelate from (S)-tetrahydrodipicolinate (succinylase route): step 3/3. In terms of biological role, catalyzes the hydrolysis of N-succinyl-L,L-diaminopimelic acid (SDAP), forming succinate and LL-2,6-diaminopimelate (DAP), an intermediate involved in the bacterial biosynthesis of lysine and meso-diaminopimelic acid, an essential component of bacterial cell walls. In Rickettsia canadensis (strain McKiel), this protein is Succinyl-diaminopimelate desuccinylase.